We begin with the raw amino-acid sequence, 33 residues long: AGQQFQYDDSGNTFFYQMAEVFEKEQSIXAAXE.

In terms of assembly, the ER translocon complex consists of channel-forming core components SEC61A1, SEC61B and SEC61G and different auxiliary components such as SEC62 and SEC63. Pancreas.

The protein localises to the endoplasmic reticulum membrane. In terms of biological role, mediates cotranslational and post-translational transport of certain precursor polypeptides across endoplasmic reticulum (ER). Proposed to play an auxiliary role in recognition of precursors with short and apolar signal peptides. May cooperate with SEC62 and HSPA5/BiP to facilitate targeting of small presecretory proteins into the SEC61 channel-forming translocon complex, triggering channel opening for polypeptide translocation to the ER lumen. Required for efficient PKD1/Polycystin-1 biogenesis and trafficking to the plasma membrane of the primary cilia. The protein is Translocation protein SEC63 homolog (SEC63) of Canis lupus familiaris (Dog).